The sequence spans 179 residues: Methylated-DNA--protein-cysteine methyltransferase, inducible (179 aa).

The active-site Nucleophile; methyl group acceptor is Cys-141.

Belongs to the MGMT family.

It carries out the reaction a 6-O-methyl-2'-deoxyguanosine in DNA + L-cysteinyl-[protein] = S-methyl-L-cysteinyl-[protein] + a 2'-deoxyguanosine in DNA. The catalysed reaction is a 4-O-methyl-thymidine in DNA + L-cysteinyl-[protein] = a thymidine in DNA + S-methyl-L-cysteinyl-[protein]. In terms of biological role, involved in the cellular defense against the biological effects of O6-methylguanine (O6-MeG) and O4-methylthymine (O4-MeT) in DNA. Repairs the methylated nucleobase in DNA by stoichiometrically transferring the methyl group to a cysteine residue in the enzyme. This is a suicide reaction: the enzyme is irreversibly inactivated. The protein is Methylated-DNA--protein-cysteine methyltransferase, inducible (adaB) of Bacillus subtilis (strain 168).